A 386-amino-acid polypeptide reads, in one-letter code: Zinc finger CCCH domain-containing protein 39 (386 aa).

The interval 1–90 (MDSSYSDSRP…SSSNPWMVPS (90 aa)) is disordered. Polar residues predominate over residues 20–37 (WNQTQMIDSMANPMNNEQ). Over residues 43–58 (LSESQSQSQPSQQLQP) the composition is skewed to low complexity. Residues 72 to 85 (NPASSFPQPSSSNP) show a composition bias toward polar residues. Residues 104–131 (FYKTRMCAKFRAGTCRNGELCNFAHGIE) form a C3H1-type 1 zinc finger. Positions 136–166 (PPSNWQEIVGPPPAGQDRERERERERERERP) are disordered. Residues 151–166 (QDRERERERERERERP) show a composition bias toward basic and acidic residues. 2 C3H1-type zinc fingers span residues 183–211 (ILRMKLCRKFCFGEECPYGDRCNFIHEDL) and 269–297 (YWKTRLCMKFDITGQCPFGDKCHFAHGQA).

This is Zinc finger CCCH domain-containing protein 39 from Arabidopsis thaliana (Mouse-ear cress).